The following is a 1564-amino-acid chain: MSSKEVKTALKSARDAIRNKEYKEALKHCKTVLKQEKNNYNAWVFIGVAAAELEQPDQAQSAYKKAAELEPDQLLAWQGLANLYEKYNHINAKDDLPGVYQKLLDLYESVDKQKWCDVCKKLVDLYYQEKKHLEVARTWHKLIKTRQEQGAENEELHQLWRKLTQFLAESTEDQNNETQQLLFTAFENALGLSDKIPSEDHQVLYRHFIQSLSKFPHESARLKKACEGMINIYPTVQYPLEVLCLHLIESGNLTDEGQQYCCRLVEMDSKSGPGLIGLGIKALQDKKYEDAVRNLTEGLKESPVCTSGWYHLAEAQVKMHRPKEAVLSCSQALKIVDNLGASGNSLYQRNLCLHLKAEALIKLSDYDSSEEAIRTLDQISDADNIPGLLVLKSLAYRNKGSFDEAAKIMEDLLSSYPDLAEVHALEALIHFTKKDYLQAEKCFQRALEKDTEVAEYHYQLGLTYWFMGEETRKDKTKALTHFLKAARLDTYMGKVFCYLGHYYRDVVGDKNRARGCYRKAFELDDTDAESGAAAVDLSVELEDMEMALAILTTVTQKASAGTAKWAWLRRGLYYLKAGQHSQAVADLQAALRADPKDFNCWESLGEAYLSRGGYTTALKSFTKASELNPESIYSVFKVAAIQQILGKYKEAVAQYQMIIKKKEDYVPALKGLGECHLMMAKAALVDYLDGKAVDYIEKALEYFTCALQHRADVSCLWKLAGDACTCLYAVAPSKVNVHVLGVLLGQKEGKQVLKKNELLHLGGRCYGRALKLMSTSNTWCDLGINYYRQAQHLAETGSNMNDLKELLEKSLHCLKKAVRLDSNNHLYWNALGVVACYSGIGNYALAQHCFIKSIQSEQINAVAWTNLGVLYLTNENIEQAHEAFKMAQSLDPSYLMCWIGQALIAEAVGSYDTMDLFRHTTELNMHTEGALGYAYWVCTTLQDKSNRETELYQYNILQMNAIPAAQVILNKYVERIQNYAPAFTMLGYLNEHLQLKKEAANAYQRAILLLQTAEDQDTYNVAIRNYGRLLCSTGEYDKAIQAFKSTPLEVLEDIIGFALALFMKGLYKESSKAYERALSIVESEQDKAHILTALAITEYKQGKTDVAKTLLFKCSILKEPTTESLQALCALGLAMQDATLSKAALNELLKHIKHKDSNYQRCLLTSAIYALQGRSVAVQKQISKAVHSNPGDPALWSLLSRVVAQYAQRNAKGGVVAGNVAHILDSNHGKKALLYTAVNQLAMGSSSAEDEKNTALKTIQKAALLSPGDPAIWAGLMAACHADDKLALVNNTQPKRIDLYLALLSAVSASIKDEKFFENYNQSLEKWSLSQAVTGLIDTGRISEAETLCTKNLKSNPDQPAVILLLRQVQCKPLLESQKPLPDAVLEELQKTVMSNSTSVPAWQWLAHVYQSQGMMRAAEMCYRKSLQLASQRGSWSGKLSSLLRLALLALKVCMANISNDHWPSLVQEATTEALKLCFCPLAVLLQALLQFKRKMGARETRRLLERVVYQPGYPKSIASTARWYLLRHLYAKDDYELIDVLVNNAKTHGDTRALELNQRLSSQ.

An N-acetylserine modification is found at Ser-2. 20 TPR repeats span residues 6–39, 40–73, 272–305, 307–339, 386–419, 420–453, 455–492, 493–527, 564–597, 598–631, 633–665, 679–713, 790–824, 826–860, 861–894, 980–1013, 1020–1054, 1056–1084, 1326–1359, and 1400–1433; these read VKTALKSARDAIRNKEYKEALKHCKTVLKQEKNN, YNAWVFIGVAAAELEQPDQAQSAYKKAAELEPDQ, GPGLIGLGIKALQDKKYEDAVRNLTEGLKESPVC, SGWYHLAEAQVKMHRPKEAVLSCSQALKIVDNL, PGLLVLKSLAYRNKGSFDEAAKIMEDLLSSYPDL, AEVHALEALIHFTKKDYLQAEKCFQRALEKDTEV, EYHYQLGLTYWFMGEETRKDKTKALTHFLKAARLDTYM, GKVFCYLGHYYRDVVGDKNRARGCYRKAFELDDTD, KWAWLRRGLYYLKAGQHSQAVADLQAALRADPKD, FNCWESLGEAYLSRGGYTTALKSFTKASELNPES, YSVFKVAAIQQILGKYKEAVAQYQMIIKKKEDY, MAKAALVDYLDGKAVDYIEKALEYFTCALQHRADV, AQHLAETGSNMNDLKELLEKSLHCLKKAVRLDSNN, LYWNALGVVACYSGIGNYALAQHCFIKSIQSEQIN, AVAWTNLGVLYLTNENIEQAHEAFKMAQSLDPSY, APAFTMLGYLNEHLQLKKEAANAYQRAILLLQTA, NVAIRNYGRLLCSTGEYDKAIQAFKSTPLEVLEDI, GFALALFMKGLYKESSKAYERALSIVESE, KWSLSQAVTGLIDTGRISEAETLCTKNLKSNPDQ, and VPAWQWLAHVYQSQGMMRAAEMCYRKSLQLASQR.

Belongs to the SKI3 family. As to quaternary structure, component of the SKI complex which consists of SKIC2, SKIC3 and SKIC8. Interacts with PAF1. Widely expressed with the highest levels observed in vascular tissues, lymph node, pituitary, lung and intestine. Not expressed in the liver.

It is found in the cytoplasm. Its subcellular location is the nucleus. In terms of biological role, component of the SKI complex, a multiprotein complex that assists the RNA-degrading exosome during the mRNA decay and quality-control pathways. The SKI complex catalyzes mRNA extraction from 80S ribosomal complexes in the 3'-5' direction and channels mRNA to the cytosolic exosome for degradation. SKI-mediated extraction of mRNA from stalled ribosomes allow binding of the Pelota-HBS1L complex and subsequent ribosome disassembly by ABCE1 for ribosome recycling. In the nucleus, the SKI complex associates with transcriptionally active genes in a manner dependent on PAF1 complex (PAF1C). In Homo sapiens (Human), this protein is Superkiller complex protein 3.